The chain runs to 423 residues: D-tagatose-1,6-bisphosphate aldolase subunit GatZ (423 aa).

This sequence belongs to the GatZ/KbaZ family. GatZ subfamily. As to quaternary structure, forms a complex with GatY.

The protein operates within carbohydrate metabolism; D-tagatose 6-phosphate degradation; D-glyceraldehyde 3-phosphate and glycerone phosphate from D-tagatose 6-phosphate: step 2/2. Its function is as follows. Component of the tagatose-1,6-bisphosphate aldolase GatYZ that is required for full activity and stability of the Y subunit. Could have a chaperone-like function for the proper and stable folding of GatY. When expressed alone, GatZ does not show any aldolase activity. Is involved in the catabolism of galactitol. The chain is D-tagatose-1,6-bisphosphate aldolase subunit GatZ from Salmonella paratyphi B (strain ATCC BAA-1250 / SPB7).